The chain runs to 205 residues: Peptidyl-tRNA hydrolase (205 aa).

Tyr-18 lines the tRNA pocket. The active-site Proton acceptor is His-23. Tyr-69, Asn-71, and Asn-117 together coordinate tRNA.

This sequence belongs to the PTH family. Monomer.

The protein localises to the cytoplasm. The catalysed reaction is an N-acyl-L-alpha-aminoacyl-tRNA + H2O = an N-acyl-L-amino acid + a tRNA + H(+). Functionally, hydrolyzes ribosome-free peptidyl-tRNAs (with 1 or more amino acids incorporated), which drop off the ribosome during protein synthesis, or as a result of ribosome stalling. In terms of biological role, catalyzes the release of premature peptidyl moieties from peptidyl-tRNA molecules trapped in stalled 50S ribosomal subunits, and thus maintains levels of free tRNAs and 50S ribosomes. The protein is Peptidyl-tRNA hydrolase of Thermosynechococcus vestitus (strain NIES-2133 / IAM M-273 / BP-1).